We begin with the raw amino-acid sequence, 293 residues long: Bifunctional protein FolD (293 aa).

NADP(+) is bound by residues 165–167 (GRS), Ser-190, and Ile-231.

The protein belongs to the tetrahydrofolate dehydrogenase/cyclohydrolase family. In terms of assembly, homodimer.

The enzyme catalyses (6R)-5,10-methylene-5,6,7,8-tetrahydrofolate + NADP(+) = (6R)-5,10-methenyltetrahydrofolate + NADPH. It catalyses the reaction (6R)-5,10-methenyltetrahydrofolate + H2O = (6R)-10-formyltetrahydrofolate + H(+). It functions in the pathway one-carbon metabolism; tetrahydrofolate interconversion. Functionally, catalyzes the oxidation of 5,10-methylenetetrahydrofolate to 5,10-methenyltetrahydrofolate and then the hydrolysis of 5,10-methenyltetrahydrofolate to 10-formyltetrahydrofolate. The polypeptide is Bifunctional protein FolD (Synechococcus sp. (strain WH7803)).